We begin with the raw amino-acid sequence, 597 residues long: U3 small nucleolar RNA-associated protein 6 homolog (597 aa).

HAT repeat units follow at residues 121 to 153, 156 to 188, 304 to 335, 488 to 520, and 524 to 557; these read ATKTRLSKVFSAMLAIHSNKPALWIMAAKWEME, LSSESARQLFLRALRFHPECPKLYKEYFRMELM, RKEERCCAVYEEAVKTLPTEAMWKCYITFCLE, GGYKKARAVFKSLQESRPFSVDFFRKMIQFEKE, and CNMANIREYYERALREFGSADSDLWMDYMKEELN.

The protein belongs to the UTP6 family. As to quaternary structure, part of the small subunit (SSU) processome, composed of more than 70 proteins and the RNA chaperone small nucleolar RNA (snoRNA) U3.

It localises to the nucleus. The protein localises to the nucleolus. Its function is as follows. Part of the small subunit (SSU) processome, first precursor of the small eukaryotic ribosomal subunit. During the assembly of the SSU processome in the nucleolus, many ribosome biogenesis factors, an RNA chaperone and ribosomal proteins associate with the nascent pre-rRNA and work in concert to generate RNA folding, modifications, rearrangements and cleavage as well as targeted degradation of pre-ribosomal RNA by the RNA exosome. Involved in nucleolar processing of pre-18S ribosomal RNA. The sequence is that of U3 small nucleolar RNA-associated protein 6 homolog from Homo sapiens (Human).